A 109-amino-acid polypeptide reads, in one-letter code: Putative double-stranded DNA mimic protein YciU (109 aa).

The protein belongs to the putative dsDNA mimic protein family.

Functionally, may act as a double-stranded DNA (dsDNA) mimic. Probably regulates the activity of a dsDNA-binding protein. This Salmonella choleraesuis (strain SC-B67) protein is Putative double-stranded DNA mimic protein YciU.